Consider the following 141-residue polypeptide: Large ribosomal subunit protein uL11 (141 aa).

This sequence belongs to the universal ribosomal protein uL11 family. Part of the ribosomal stalk of the 50S ribosomal subunit. Interacts with L10 and the large rRNA to form the base of the stalk. L10 forms an elongated spine to which L12 dimers bind in a sequential fashion forming a multimeric L10(L12)X complex. Post-translationally, one or more lysine residues are methylated.

Forms part of the ribosomal stalk which helps the ribosome interact with GTP-bound translation factors. The sequence is that of Large ribosomal subunit protein uL11 from Roseobacter denitrificans (strain ATCC 33942 / OCh 114) (Erythrobacter sp. (strain OCh 114)).